Here is a 166-residue protein sequence, read N- to C-terminus: Small ribosomal subunit protein uS5 (166 aa).

Residues 11–74 form the S5 DRBM domain; it reads LQEKLIAVNR…EKARRNMINV (64 aa).

The protein belongs to the universal ribosomal protein uS5 family. Part of the 30S ribosomal subunit. Contacts proteins S4 and S8.

In terms of biological role, with S4 and S12 plays an important role in translational accuracy. Functionally, located at the back of the 30S subunit body where it stabilizes the conformation of the head with respect to the body. In Haemophilus ducreyi (strain 35000HP / ATCC 700724), this protein is Small ribosomal subunit protein uS5.